A 173-amino-acid polypeptide reads, in one-letter code: Adenine phosphoribosyltransferase (173 aa).

The protein belongs to the purine/pyrimidine phosphoribosyltransferase family. In terms of assembly, homodimer.

The protein localises to the cytoplasm. The catalysed reaction is AMP + diphosphate = 5-phospho-alpha-D-ribose 1-diphosphate + adenine. It participates in purine metabolism; AMP biosynthesis via salvage pathway; AMP from adenine: step 1/1. Functionally, catalyzes a salvage reaction resulting in the formation of AMP, that is energically less costly than de novo synthesis. The polypeptide is Adenine phosphoribosyltransferase (Chloroflexus aurantiacus (strain ATCC 29366 / DSM 635 / J-10-fl)).